Reading from the N-terminus, the 229-residue chain is Cytochrome c oxidase subunit 2 (229 aa).

At 1 to 26 (MATWMNINLQDANSSTMEQLTMFHDH) the chain is on the mitochondrial intermembrane side. The helical transmembrane segment at 27–48 (TLMILTMITSIVTFIMVSMTTN) threads the bilayer. The Mitochondrial matrix portion of the chain corresponds to 49–62 (TLINRYLLEGQTIE). A helical transmembrane segment spans residues 63 to 82 (FIWTTIPAITLIFIALPSLH). Residues 83–229 (LLYLIDEINN…LKWINKSLSS (147 aa)) are Mitochondrial intermembrane-facing. H161, C196, E198, C200, H204, and M207 together coordinate Cu cation. E198 is a Mg(2+) binding site.

The protein belongs to the cytochrome c oxidase subunit 2 family. Component of the cytochrome c oxidase (complex IV, CIV), a multisubunit enzyme composed of a catalytic core of 3 subunits and several supernumerary subunits. The complex exists as a monomer or a dimer and forms supercomplexes (SCs) in the inner mitochondrial membrane with ubiquinol-cytochrome c oxidoreductase (cytochrome b-c1 complex, complex III, CIII). Requires Cu cation as cofactor.

Its subcellular location is the mitochondrion inner membrane. The catalysed reaction is 4 Fe(II)-[cytochrome c] + O2 + 8 H(+)(in) = 4 Fe(III)-[cytochrome c] + 2 H2O + 4 H(+)(out). Functionally, component of the cytochrome c oxidase, the last enzyme in the mitochondrial electron transport chain which drives oxidative phosphorylation. The respiratory chain contains 3 multisubunit complexes succinate dehydrogenase (complex II, CII), ubiquinol-cytochrome c oxidoreductase (cytochrome b-c1 complex, complex III, CIII) and cytochrome c oxidase (complex IV, CIV), that cooperate to transfer electrons derived from NADH and succinate to molecular oxygen, creating an electrochemical gradient over the inner membrane that drives transmembrane transport and the ATP synthase. Cytochrome c oxidase is the component of the respiratory chain that catalyzes the reduction of oxygen to water. Electrons originating from reduced cytochrome c in the intermembrane space (IMS) are transferred via the dinuclear copper A center (CU(A)) of subunit 2 and heme A of subunit 1 to the active site in subunit 1, a binuclear center (BNC) formed by heme A3 and copper B (CU(B)). The BNC reduces molecular oxygen to 2 water molecules using 4 electrons from cytochrome c in the IMS and 4 protons from the mitochondrial matrix. This is Cytochrome c oxidase subunit 2 (COII) from Oncopeltus fasciatus (Large milkweed bug).